A 469-amino-acid chain; its full sequence is 2-amino-4-ketopentanoate thiolase beta subunit (469 aa).

The residue at position 102 (Lys102) is an N6-(pyridoxal phosphate)lysine. Pyridoxal 5'-phosphate-binding positions include Asn128 and 238 to 242 (AGGGN).

Belongs to the threonine synthase family. As to quaternary structure, heterodimer with OrtA. It depends on pyridoxal 5'-phosphate as a cofactor.

It carries out the reaction D-alanine + acetyl-CoA = (2R)-2-amino-4-oxopentanoate + CoA. With respect to regulation, completely inhibited by p-chloromercuribenzoate (p-ClHgBzO) and acetyl-CoA, and partially inhibited by N-ethylmaleimide. Involved in the ornithine fermentation pathway. Catalyzes the thiolytic cleavage of 2-amino-4-ketopentanoate (AKP) with coenzyme A (CoA) to form acetyl-CoA and alanine. It is strictly specific for AKP. This is 2-amino-4-ketopentanoate thiolase beta subunit from Acetoanaerobium sticklandii (strain ATCC 12662 / DSM 519 / JCM 1433 / CCUG 9281 / NCIMB 10654 / HF) (Clostridium sticklandii).